Here is a 76-residue protein sequence, read N- to C-terminus: Conotoxin Gla(1)-TxVI (76 aa).

The first 19 residues, 1-19, serve as a signal peptide directing secretion; sequence MEKLTILLLVAAVLMSTQA. Residues 20–45 constitute a propeptide that is removed on maturation; sequence LVERAGENHSKENINFLLKRKRAADR. Trp48 carries the 6'-bromotryptophan modification. Residue Glu50 is modified to 4-carboxyglutamate. Intrachain disulfides connect Cys51–Cys65, Cys58–Cys69, and Cys64–Cys73. Position 61 is a 4-hydroxyproline (Pro61). Glu63, Glu67, and Glu70 each carry 4-carboxyglutamate. Position 76 is a 6'-bromotryptophan (Trp76).

As to expression, expressed by the venom duct.

Its subcellular location is the secreted. This is Conotoxin Gla(1)-TxVI from Conus textile (Cloth-of-gold cone).